The following is a 98-amino-acid chain: MMSINLNLIMAFLLALAGVLIYRSHLMSTLLCLEGMMLSLFILMALLISHFHMFSASMAPLILLVFSACEAGVGLALLVKTSSNYGNDYVQNLNLLQC.

Transmembrane regions (helical) follow at residues 1-21 (MMSINLNLIMAFLLALAGVLI), 28-48 (STLLCLEGMMLSLFILMALLI), and 59-79 (APLILLVFSACEAGVGLALLV).

The protein belongs to the complex I subunit 4L family. Core subunit of respiratory chain NADH dehydrogenase (Complex I) which is composed of 45 different subunits.

It is found in the mitochondrion inner membrane. It catalyses the reaction a ubiquinone + NADH + 5 H(+)(in) = a ubiquinol + NAD(+) + 4 H(+)(out). Its function is as follows. Core subunit of the mitochondrial membrane respiratory chain NADH dehydrogenase (Complex I) which catalyzes electron transfer from NADH through the respiratory chain, using ubiquinone as an electron acceptor. Part of the enzyme membrane arm which is embedded in the lipid bilayer and involved in proton translocation. This Lagorchestes hirsutus (Rufous hare-wallaby) protein is NADH-ubiquinone oxidoreductase chain 4L (MT-ND4L).